A 174-amino-acid polypeptide reads, in one-letter code: Small ribosomal subunit protein uS5 (174 aa).

The S5 DRBM domain occupies 19-82 (LREKMVAINR…DEARRKLKKI (64 aa)).

The protein belongs to the universal ribosomal protein uS5 family. In terms of assembly, part of the 30S ribosomal subunit. Contacts proteins S4 and S8.

In terms of biological role, with S4 and S12 plays an important role in translational accuracy. Functionally, located at the back of the 30S subunit body where it stabilizes the conformation of the head with respect to the body. This Aromatoleum aromaticum (strain DSM 19018 / LMG 30748 / EbN1) (Azoarcus sp. (strain EbN1)) protein is Small ribosomal subunit protein uS5.